The following is a 372-amino-acid chain: 7-methylxanthosine synthase 1 (372 aa).

Position 18 (Y18) interacts with S-adenosyl-L-homocysteine. Residues N21 and N25 each contribute to the xanthosine site. Residues C62, N67, D101, L102, S140, F141, and C157 each coordinate S-adenosyl-L-homocysteine. Y158 is a binding site for xanthosine. S-adenosyl-L-homocysteine is bound at residue C159. Xanthosine is bound by residues Q161 and W162. Residues N179, D261, F263, and N264 each contribute to the Mg(2+) site. Xanthosine-binding residues include S316, Y321, and Y356.

It belongs to the methyltransferase superfamily. Type-7 methyltransferase family. It depends on Mg(2+) as a cofactor. In terms of tissue distribution, expressed in stems, young leaves, floral buds, developing endosperm and immature fruits (grains). Detected in roots and old leaves, but not in mature fruits.

It catalyses the reaction xanthosine + S-adenosyl-L-methionine = 7-methylxanthosine + S-adenosyl-L-homocysteine. Its pathway is alkaloid biosynthesis. Involved in the biosynthesis of caffeine. Specific for xanthosine and could not use xanthosine 5'-monophosphate (XMP) as substrate. Catalyzes the 7-N-methylation activity of xanthosine, but does not have 1-N- or 3-N-methylation activity. The sequence is that of 7-methylxanthosine synthase 1 from Coffea arabica (Arabian coffee).